The chain runs to 921 residues: MAPLALVGVTLLLAAPPCSGAATPTPSLPPPPANDSDTSTGGCQGSYRCQPGVLLPVWEPDDPSLGDKAARAVVYFVAMVYMFLGVSIIADRFMAAIEVITSKEKEITITKANGETSVGTVRIWNETVSNLTLMALGSSAPEILLSVIEVCGHNFQAGELGPGTIVGSAAFNMFVVIAVCIYVIPAGESRKIKHLRVFFVTASWSIFAYVWLYLILAVFSPGVVQVWEALLTLVFFPVCVVFAWMADKRLLFYKYVYKRYRTDPRSGIIIGAEGDPPKSIELDGTFVGAEAPGELGGLGPGPAEARELDASRREVIQILKDLKQKHPDKDLEQLVGIANYYALLHQQKSRAFYRIQATRLMTGAGNVLRRHAADASRRAAPAEGAGEDEDDGASRIFFEPSLYHCLENCGSVLLSVTCQGGEGNSTFYVDYRTEDGSAKAGSDYEYSEGTLVFKPGETQKELRIGIIDDDIFEEDEHFFVRLLNLRVGDAQGMFEPDGGGRPKGRLVAPLLATVTILDDDHAGIFSFQDRLLHVSECMGTVDVRVVRSSGARGTVRLPYRTVDGTARGGGVHYEDACGELEFGDDETMKTLQVKIVDDEEYEKKDNFFIELGQPQWLKRGISALLLNQGDGDRKLTAEEEEARRIAEMGKPVLGENCRLEVIIEESYDFKNTVDKLIKKTNLALVIGTHSWREQFLEAITVSAGDEEEEEDGSREERLPSCFDYVMHFLTVFWKVLFACVPPTEYCHGWACFGVSILVIGLLTALIGDLASHFGCTVGLKDSVNAVVFVALGTSIPDTFASKVAALQDQCADASIGNVTGSNAVNVFLGLGVAWSVAAVYWAVQGRPFEVRTGTLAFSVTLFTVFAFVGIAVLLYRRRPHIGGELGGPRGPKLATTALFLGLWLLYILFASLEAYCHIRGF.

The signal sequence occupies residues 1 to 20; that stretch reads MAPLALVGVTLLLAAPPCSG. Residues 21-68 are Extracellular-facing; that stretch reads AATPTPSLPPPPANDSDTSTGGCQGSYRCQPGVLLPVWEPDDPSLGDK. The segment at 22–42 is disordered; sequence ATPTPSLPPPPANDSDTSTGG. A glycan (N-linked (GlcNAc...) asparagine) is linked at N34. A helical membrane pass occupies residues 69–90; that stretch reads AARAVVYFVAMVYMFLGVSIIA. Topologically, residues 91 to 130 are cytoplasmic; it reads DRFMAAIEVITSKEKEITITKANGETSVGTVRIWNETVSN. A helical transmembrane segment spans residues 131–152; that stretch reads LTLMALGSSAPEILLSVIEVCG. The Alpha-1 repeat unit spans residues 135-175; the sequence is ALGSSAPEILLSVIEVCGHNFQAGELGPGTIVGSAAFNMFV. Residues 153-164 lie on the Extracellular side of the membrane; sequence HNFQAGELGPGT. A helical membrane pass occupies residues 165 to 185; that stretch reads IVGSAAFNMFVVIAVCIYVIP. Residues 186–196 are Cytoplasmic-facing; the sequence is AGESRKIKHLR. Residues 197-219 form a helical membrane-spanning segment; it reads VFFVTASWSIFAYVWLYLILAVF. Over 220–222 the chain is Extracellular; it reads SPG. A helical transmembrane segment spans residues 223–246; sequence VVQVWEALLTLVFFPVCVVFAWMA. Residues 247 to 720 are Cytoplasmic-facing; that stretch reads DKRLLFYKYV…DGSREERLPS (474 aa). Residues 248–267 are putative calmodulin-binding region; sequence KRLLFYKYVYKRYRTDPRSG. Calx-beta domains lie at 384-483 and 512-612; these read GAGE…VRLL and ATVT…IELG. Residues E407, D443, D468, D469, I471, E473, E476, D518, D519, D520, E536, D598, E599, and E600 each contribute to the Ca(2+) site. S622 is modified (phosphoserine). Position 665 (E665) interacts with Ca(2+). The chain crosses the membrane as a helical span at residues 721–740; the sequence is CFDYVMHFLTVFWKVLFACV. At 741 to 747 the chain is on the extracellular side; it reads PPTEYCH. Residues 748–770 traverse the membrane as a helical segment; it reads GWACFGVSILVIGLLTALIGDLA. The Cytoplasmic segment spans residues 771–772; sequence SH. A helical transmembrane segment spans residues 773 to 791; that stretch reads FGCTVGLKDSVNAVVFVAL. The stretch at 790 to 826 is one Alpha-2 repeat; the sequence is ALGTSIPDTFASKVAALQDQCADASIGNVTGSNAVNV. At 792–822 the chain is on the extracellular side; it reads GTSIPDTFASKVAALQDQCADASIGNVTGSN. N817 carries N-linked (GlcNAc...) asparagine glycosylation. The chain crosses the membrane as a helical span at residues 823–843; that stretch reads AVNVFLGLGVAWSVAAVYWAV. Topologically, residues 844–854 are cytoplasmic; sequence QGRPFEVRTGT. The chain crosses the membrane as a helical span at residues 855–875; it reads LAFSVTLFTVFAFVGIAVLLY. The Extracellular portion of the chain corresponds to 876-892; sequence RRRPHIGGELGGPRGPK. Residues 893 to 909 form a helical membrane-spanning segment; that stretch reads LATTALFLGLWLLYILF. The Cytoplasmic portion of the chain corresponds to 910 to 921; that stretch reads ASLEAYCHIRGF.

It belongs to the Ca(2+):cation antiporter (CaCA) (TC 2.A.19) family. SLC8 subfamily.

It localises to the cell membrane. Its subcellular location is the basolateral cell membrane. It is found in the perikaryon. The protein localises to the cell projection. The protein resides in the dendrite. It localises to the dendritic spine. The enzyme catalyses Ca(2+)(in) + 3 Na(+)(out) = Ca(2+)(out) + 3 Na(+)(in). Calcium transport is down-regulated by Na(+) and stimulated by Ca(2+). Its function is as follows. Mediates the electrogenic exchange of Ca(2+) against Na(+) ions across the cell membrane, and thereby contributes to the regulation of cytoplasmic Ca(2+) levels and Ca(2+)-dependent cellular processes. Contributes to cellular Ca(2+) homeostasis in excitable cells. Contributes to the rapid decrease of cytoplasmic Ca(2+) levels back to baseline after neuronal activation, and thereby contributes to modulate synaptic plasticity, learning and memory. Plays a role in regulating urinary Ca(2+) and Na(+) excretion. The protein is Sodium/calcium exchanger 2 (SLC8A2) of Homo sapiens (Human).